Reading from the N-terminus, the 332-residue chain is Large ribosomal subunit protein mL44 (332 aa).

Residues 1-30 constitute a mitochondrion transit peptide; sequence MASGLTRLLLRGPRCLLATAGLTLIPPVRG. In terms of domain architecture, RNase III spans 86–228; that stretch reads DLLKTAFVNS…LITQMTGKEL (143 aa). The DRBM domain occupies 236–306; the sequence is NPMGLLVQEL…ARVALRKLYG (71 aa).

Belongs to the ribonuclease III family. Mitochondrion-specific ribosomal protein mL44 subfamily. Component of the mitochondrial ribosome large subunit (39S) which comprises a 16S rRNA and about 50 distinct proteins.

The protein resides in the mitochondrion. Its function is as follows. Component of the 39S subunit of mitochondrial ribosome. May have a function in the assembly/stability of nascent mitochondrial polypeptides exiting the ribosome. In Bos taurus (Bovine), this protein is Large ribosomal subunit protein mL44 (MRPL44).